The following is a 262-amino-acid chain: Putative hydro-lyase RHA1_ro03475 (262 aa).

This sequence belongs to the D-glutamate cyclase family.

The sequence is that of Putative hydro-lyase RHA1_ro03475 from Rhodococcus jostii (strain RHA1).